The following is a 143-amino-acid chain: Large ribosomal subunit protein uL13 (143 aa).

Belongs to the universal ribosomal protein uL13 family. As to quaternary structure, part of the 50S ribosomal subunit.

This protein is one of the early assembly proteins of the 50S ribosomal subunit, although it is not seen to bind rRNA by itself. It is important during the early stages of 50S assembly. This is Large ribosomal subunit protein uL13 from Finegoldia magna (strain ATCC 29328 / DSM 20472 / WAL 2508) (Peptostreptococcus magnus).